We begin with the raw amino-acid sequence, 84 residues long: Small ribosomal subunit protein uS17 (84 aa).

It belongs to the universal ribosomal protein uS17 family. In terms of assembly, part of the 30S ribosomal subunit.

In terms of biological role, one of the primary rRNA binding proteins, it binds specifically to the 5'-end of 16S ribosomal RNA. The sequence is that of Small ribosomal subunit protein uS17 from Actinobacillus pleuropneumoniae serotype 5b (strain L20).